The chain runs to 245 residues: Pyridoxine 5'-phosphate synthase (245 aa).

N7 serves as a coordination point for 3-amino-2-oxopropyl phosphate. 9-10 (DH) provides a ligand contact to 1-deoxy-D-xylulose 5-phosphate. 3-amino-2-oxopropyl phosphate is bound at residue R18. The active-site Proton acceptor is H43. The 1-deoxy-D-xylulose 5-phosphate site is built by R45 and H50. E70 serves as the catalytic Proton acceptor. T100 is a 1-deoxy-D-xylulose 5-phosphate binding site. H190 functions as the Proton donor in the catalytic mechanism. Residues G191 and 212-213 (GH) contribute to the 3-amino-2-oxopropyl phosphate site.

The protein belongs to the PNP synthase family. Homooctamer; tetramer of dimers.

It localises to the cytoplasm. The catalysed reaction is 3-amino-2-oxopropyl phosphate + 1-deoxy-D-xylulose 5-phosphate = pyridoxine 5'-phosphate + phosphate + 2 H2O + H(+). It participates in cofactor biosynthesis; pyridoxine 5'-phosphate biosynthesis; pyridoxine 5'-phosphate from D-erythrose 4-phosphate: step 5/5. Catalyzes the complicated ring closure reaction between the two acyclic compounds 1-deoxy-D-xylulose-5-phosphate (DXP) and 3-amino-2-oxopropyl phosphate (1-amino-acetone-3-phosphate or AAP) to form pyridoxine 5'-phosphate (PNP) and inorganic phosphate. The polypeptide is Pyridoxine 5'-phosphate synthase (Prochlorococcus marinus (strain MIT 9303)).